The following is a 504-amino-acid chain: L-carnitine/gamma-butyrobetaine antiporter (504 aa).

Helical transmembrane passes span 10-30 (IEPK…WLTV), 51-71 (WGWA…WLVF), 92-112 (IFMM…SIEI), 143-163 (GPLP…FFFV), 195-215 (FYLV…TPLV), 231-251 (LDAI…ACGL), 263-283 (SYLS…SFIM), 316-336 (WTVF…IFLA), 347-367 (LCFG…TVLG), 398-418 (WAAL…CFIA), 446-466 (LLVR…LLAL), and 475-495 (AIIA…LSFI).

This sequence belongs to the BCCT transporter (TC 2.A.15) family. CaiT subfamily. Homotrimer.

The protein localises to the cell inner membrane. It catalyses the reaction 4-(trimethylamino)butanoate(in) + (R)-carnitine(out) = 4-(trimethylamino)butanoate(out) + (R)-carnitine(in). It functions in the pathway amine and polyamine metabolism; carnitine metabolism. Catalyzes the exchange of L-carnitine for gamma-butyrobetaine. In Escherichia coli O81 (strain ED1a), this protein is L-carnitine/gamma-butyrobetaine antiporter.